The following is a 199-amino-acid chain: Recombination protein RecR (199 aa).

The C4-type zinc-finger motif lies at 58 to 73; the sequence is CQRCFHLSSEDLCNIC. The region spanning 81-175 is the Toprim domain; the sequence is QTICVVADPR…RVTRIAFGLP (95 aa).

The protein belongs to the RecR family.

In terms of biological role, may play a role in DNA repair. It seems to be involved in an RecBC-independent recombinational process of DNA repair. It may act with RecF and RecO. In Synechococcus elongatus (strain ATCC 33912 / PCC 7942 / FACHB-805) (Anacystis nidulans R2), this protein is Recombination protein RecR.